Consider the following 214-residue polypeptide: uncharacterized protein (214 aa).

Residues 10–30 traverse the membrane as a helical segment; sequence LLLAGIGGFMVGGLASWVVSS. Residues 147-157 show a composition bias toward polar residues; the sequence is SSQANSQSTQP. Residues 147–166 form a disordered region; the sequence is SSQANSQSTQPRDPIPTENF.

Its subcellular location is the membrane. This is an uncharacterized protein from Schizosaccharomyces pombe (strain 972 / ATCC 24843) (Fission yeast).